Consider the following 422-residue polypeptide: Protein MANNAN SYNTHESIS-RELATED 1 (422 aa).

Residues 1–6 (MGVDLR) are Cytoplasmic-facing. Residues 7–26 (QVVAGILTITMFVMLGQMLH) form a helical; Signal-anchor for type II membrane protein membrane-spanning segment. Topologically, residues 27–422 (RDYFDSLQEK…KNHLAYSCFC (396 aa)) are lumenal. Residue 263–265 (DLR) coordinates substrate.

It belongs to the glycosyltransferase GT106 family. Widely expressed.

It localises to the golgi apparatus membrane. It participates in glycan biosynthesis. In terms of biological role, glycosyltransferase involved in mannan biosynthesis. This chain is Protein MANNAN SYNTHESIS-RELATED 1, found in Arabidopsis thaliana (Mouse-ear cress).